The following is a 350-amino-acid chain: F(420)H(2) dehydrogenase subunit H (350 aa).

The next 8 helical transmembrane spans lie at 21-41 (GTVG…AVWI), 94-114 (VFML…AVFI), 128-148 (ISIL…FMAA), 173-193 (PLGI…IIDI), 200-220 (FVWN…ALMA), 261-281 (ILGS…PAFV), 288-308 (GLIA…MTII), and 330-350 (LLPL…YLGA).

This sequence belongs to the complex I subunit 1 family. In terms of assembly, the FPO complex is composed of at least 13 different subunits. FpoA, FpoH, FpoJ, FpoK, FpoL, FpoM and FpoN proteins constitute the membrane sector of the complex.

The protein localises to the cell membrane. The enzyme catalyses methanophenazine + reduced coenzyme F420-(gamma-L-Glu)(n) = dihydromethanophenazine + oxidized coenzyme F420-(gamma-L-Glu)(n) + H(+). Functionally, component of the F(420)H(2) dehydrogenase (FPO complex) which is part of the energy-conserving F(420)H(2):heterodisulfide oxidoreductase system. The membrane-bound electron transfer system of the complex plays an important role in the metabolism of methylotrophic methanogens when the organisms grow on methanol or methylamines. Catalyzes the oxidation of methanophenazine to dihydromethanophenazine. It shuttles electrons from F(420)H(2), via FAD and iron-sulfur (Fe-S) centers, to methanophenazine (an electron carrier in the membrane). It couples the redox reaction to proton translocation (for every two electrons transferred, two hydrogen ions are translocated across the cytoplasmic membrane), and thus conserves the redox energy in a proton gradient. It also catalyzes the oxidation of F(420)H(2) with quinones such as 2,3-dimethyl-1,4-naphthoquinone, 2-methyl-1,4-naphthoquinone and tetramethyl-p-benzoquinone. The protein is F(420)H(2) dehydrogenase subunit H of Methanosarcina mazei (strain ATCC BAA-159 / DSM 3647 / Goe1 / Go1 / JCM 11833 / OCM 88) (Methanosarcina frisia).